The following is a 718-amino-acid chain: Catalase-peroxidase (718 aa).

The segment at residues 92-220 is a cross-link (tryptophyl-tyrosyl-methioninium (Trp-Tyr) (with M-246)); that stretch reads WHAAGTYRTA…LASVMMGLIY (129 aa). His-93 functions as the Proton acceptor in the catalytic mechanism. Positions 220-246 form a cross-link, tryptophyl-tyrosyl-methioninium (Tyr-Met) (with W-92); sequence YVNPEGVDGHPDPLKTANDVRVTFERM. Residue His-261 participates in heme b binding.

Belongs to the peroxidase family. Peroxidase/catalase subfamily. In terms of assembly, homodimer or homotetramer. Heme b serves as cofactor. Formation of the three residue Trp-Tyr-Met cross-link is important for the catalase, but not the peroxidase activity of the enzyme.

The enzyme catalyses H2O2 + AH2 = A + 2 H2O. It carries out the reaction 2 H2O2 = O2 + 2 H2O. In terms of biological role, bifunctional enzyme with both catalase and broad-spectrum peroxidase activity. The protein is Catalase-peroxidase of Shewanella halifaxensis (strain HAW-EB4).